A 4717-amino-acid chain; its full sequence is Midasin (4717 aa).

6 AAA-ATPase protomer regions span residues 149-384, 458-797, 871-1131, 1157-1448, 1552-1811, and 1858-2106; these read LVQK…FGAF, EQLA…GLRR, EHYI…QEVI, SLKE…NACE, VLRA…EVFD, and VLES…FLLK. ATP contacts are provided by residues 159–166 and 474–481; these read GPEGIGKK and GETGTGKT. Ser593 is subject to Phosphoserine. ATP is bound by residues 901-908, 1193-1200, 1566-1573, and 1876-1883; these read GPTSSGKT, GDTGCGKT, GSPGVGKT, and GDTATGKT. Positions 2173 to 3925 are linker; that stretch reads KLLRKVLLTN…SGVGAEDITN (1753 aa). Disordered stretches follow at residues 3898–3924, 3936–4283, and 4295–4365; these read PQEGKSNSGELESGTGLGSGVGAEDIT, LANE…LGDH, and EWED…EVGD. Composition is skewed to acidic residues over residues 3936 to 3950 and 3973 to 3993; these read LANEEDTANQSDLDE and ENSDSEEENQDLDEEVNDIPE. Residues 4020–4030 show a composition bias toward polar residues; the sequence is NEQSAANNESD. Over residues 4031 to 4049 the composition is skewed to basic and acidic residues; the sequence is LVSKEDDNKALEDKDRQEK. Acidic residues predominate over residues 4050-4066; it reads EDEEEMSDDVGIDDEIQ. Basic and acidic residues predominate over residues 4080-4103; the sequence is NEDHLDLPEDLKLDEKEGDVSKDS. Acidic residues-rich tracts occupy residues 4104–4177, 4184–4196, and 4226–4236; these read DLED…ESTE, EELEQGEVPEDQA, and ENEELGEEDGA. 2 stretches are compositionally biased toward basic and acidic residues: residues 4258–4275 and 4329–4342; these read QKGEDTSTPKEAMSEADR and AEKDQIKSIDRDES. Polar residues predominate over residues 4343–4355; the sequence is ANQNPDSMNSTNI. The 203-residue stretch at 4505–4707 folds into the VWFA domain; that stretch reads QVMISIDDSK…ELPQLLSSAL (203 aa).

This sequence belongs to the midasin family. Associates with pre-60S ribosomes in the nucleoplasm.

It localises to the nucleus. Its subcellular location is the nucleolus. It is found in the nucleoplasm. Its function is as follows. Nuclear chaperone required for maturation and nuclear export of pre-60S ribosome subunits. Functions at successive maturation steps to remove ribosomal factors at critical transition points, first driving the exit of early pre-60S particles from the nucleolus and then driving late pre-60S particles from the nucleus. The sequence is that of Midasin (mdn1) from Schizosaccharomyces pombe (strain 972 / ATCC 24843) (Fission yeast).